The primary structure comprises 358 residues: Chorismate synthase (358 aa).

R47 contributes to the NADP(+) binding site. Residues 124 to 126, 240 to 241, G284, 299 to 303, and R325 each bind FMN; these read RSS, NA, and KPIAT.

The protein belongs to the chorismate synthase family. Homotetramer. FMNH2 serves as cofactor.

It carries out the reaction 5-O-(1-carboxyvinyl)-3-phosphoshikimate = chorismate + phosphate. It participates in metabolic intermediate biosynthesis; chorismate biosynthesis; chorismate from D-erythrose 4-phosphate and phosphoenolpyruvate: step 7/7. In terms of biological role, catalyzes the anti-1,4-elimination of the C-3 phosphate and the C-6 proR hydrogen from 5-enolpyruvylshikimate-3-phosphate (EPSP) to yield chorismate, which is the branch point compound that serves as the starting substrate for the three terminal pathways of aromatic amino acid biosynthesis. This reaction introduces a second double bond into the aromatic ring system. The protein is Chorismate synthase of Bacteroides thetaiotaomicron (strain ATCC 29148 / DSM 2079 / JCM 5827 / CCUG 10774 / NCTC 10582 / VPI-5482 / E50).